A 119-amino-acid polypeptide reads, in one-letter code: Ribonuclease P protein component (119 aa).

This sequence belongs to the RnpA family. As to quaternary structure, consists of a catalytic RNA component (M1 or rnpB) and a protein subunit.

It carries out the reaction Endonucleolytic cleavage of RNA, removing 5'-extranucleotides from tRNA precursor.. RNaseP catalyzes the removal of the 5'-leader sequence from pre-tRNA to produce the mature 5'-terminus. It can also cleave other RNA substrates such as 4.5S RNA. The protein component plays an auxiliary but essential role in vivo by binding to the 5'-leader sequence and broadening the substrate specificity of the ribozyme. The polypeptide is Ribonuclease P protein component (Edwardsiella ictaluri (strain 93-146)).